Here is a 371-residue protein sequence, read N- to C-terminus: uncharacterized protein (371 aa).

A helical membrane pass occupies residues 17–33 (FLLFSVVLIIVMTTLVF).

To S.pombe SpBC4C3.08 and SpBC4C3.09.

It is found in the membrane. This is an uncharacterized protein from Schizosaccharomyces pombe (strain 972 / ATCC 24843) (Fission yeast).